A 349-amino-acid chain; its full sequence is Hydroxymethylglutaryl-CoA synthase (349 aa).

A (3S)-3-hydroxy-3-methylglutaryl-CoA-binding site is contributed by D29. E81 acts as the Proton donor/acceptor in catalysis. (3S)-3-hydroxy-3-methylglutaryl-CoA-binding residues include C113, S154, T202, and H235. C113 serves as the catalytic Acyl-thioester intermediate. H235 (proton donor/acceptor) is an active-site residue. R240 is a CoA binding site. (3S)-3-hydroxy-3-methylglutaryl-CoA-binding residues include R244, N267, and S297.

This sequence belongs to the thiolase-like superfamily. Archaeal HMG-CoA synthase family. In terms of assembly, interacts with acetoacetyl-CoA thiolase that catalyzes the precedent step in the pathway and with a DUF35 protein. The acetoacetyl-CoA thiolase/HMG-CoA synthase complex channels the intermediate via a fused CoA-binding site, which allows for efficient coupling of the endergonic thiolase reaction with the exergonic HMGCS reaction.

The catalysed reaction is acetoacetyl-CoA + acetyl-CoA + H2O = (3S)-3-hydroxy-3-methylglutaryl-CoA + CoA + H(+). It participates in metabolic intermediate biosynthesis; (R)-mevalonate biosynthesis; (R)-mevalonate from acetyl-CoA: step 2/3. Functionally, catalyzes the condensation of acetyl-CoA with acetoacetyl-CoA to form 3-hydroxy-3-methylglutaryl-CoA (HMG-CoA). Functions in the mevalonate (MVA) pathway leading to isopentenyl diphosphate (IPP), a key precursor for the biosynthesis of isoprenoid compounds that are building blocks of archaeal membrane lipids. This Pyrobaculum arsenaticum (strain DSM 13514 / JCM 11321 / PZ6) protein is Hydroxymethylglutaryl-CoA synthase.